The chain runs to 353 residues: Protein RecA (353 aa).

74–81 (GPESSGKT) provides a ligand contact to ATP.

This sequence belongs to the RecA family.

Its subcellular location is the cytoplasm. Functionally, can catalyze the hydrolysis of ATP in the presence of single-stranded DNA, the ATP-dependent uptake of single-stranded DNA by duplex DNA, and the ATP-dependent hybridization of homologous single-stranded DNAs. It interacts with LexA causing its activation and leading to its autocatalytic cleavage. The polypeptide is Protein RecA (Bordetella bronchiseptica (strain ATCC BAA-588 / NCTC 13252 / RB50) (Alcaligenes bronchisepticus)).